A 290-amino-acid polypeptide reads, in one-letter code: ATP synthase gamma chain (290 aa).

The protein belongs to the ATPase gamma chain family. F-type ATPases have 2 components, CF(1) - the catalytic core - and CF(0) - the membrane proton channel. CF(1) has five subunits: alpha(3), beta(3), gamma(1), delta(1), epsilon(1). CF(0) has three main subunits: a, b and c.

It localises to the cell inner membrane. Functionally, produces ATP from ADP in the presence of a proton gradient across the membrane. The gamma chain is believed to be important in regulating ATPase activity and the flow of protons through the CF(0) complex. This is ATP synthase gamma chain from Phenylobacterium zucineum (strain HLK1).